An 80-amino-acid polypeptide reads, in one-letter code: Exodeoxyribonuclease 7 small subunit (80 aa).

It belongs to the XseB family. Heterooligomer composed of large and small subunits.

The protein localises to the cytoplasm. The catalysed reaction is Exonucleolytic cleavage in either 5'- to 3'- or 3'- to 5'-direction to yield nucleoside 5'-phosphates.. Bidirectionally degrades single-stranded DNA into large acid-insoluble oligonucleotides, which are then degraded further into small acid-soluble oligonucleotides. The sequence is that of Exodeoxyribonuclease 7 small subunit from Photobacterium profundum (strain SS9).